We begin with the raw amino-acid sequence, 734 residues long: Photosystem I P700 chlorophyll a apoprotein A2 (734 aa).

8 helical membrane-spanning segments follow: residues 46–69 (IFAS…FHVA), 135–158 (LYAG…LHLQ), 175–199 (LNHH…HVAI), 273–291 (MAHH…GHMY), 330–353 (LHFQ…QHMY), 369–395 (AALY…IFLI), 417–439 (AIIS…LYVH), and 517–535 (FLVH…LILV). Cys559 and Cys568 together coordinate [4Fe-4S] cluster. The next 2 helical transmembrane spans lie at 575-596 (AFYL…YWHW) and 643-665 (LSVW…MFLI). Positions 654, 662, and 670 each coordinate chlorophyll a. Phylloquinone is bound at residue Trp671. Residues 707–727 (LVGLAHFSVGYIFTYAAFLIA) form a helical membrane-spanning segment.

It belongs to the PsaA/PsaB family. In terms of assembly, the PsaA/B heterodimer binds the P700 chlorophyll special pair and subsequent electron acceptors. PSI consists of a core antenna complex that captures photons, and an electron transfer chain that converts photonic excitation into a charge separation. The eukaryotic PSI reaction center is composed of at least 11 subunits. It depends on P700 is a chlorophyll a/chlorophyll a' dimer, A0 is one or more chlorophyll a, A1 is one or both phylloquinones and FX is a shared 4Fe-4S iron-sulfur center. as a cofactor.

The protein resides in the plastid. It localises to the chloroplast thylakoid membrane. The catalysed reaction is reduced [plastocyanin] + hnu + oxidized [2Fe-2S]-[ferredoxin] = oxidized [plastocyanin] + reduced [2Fe-2S]-[ferredoxin]. Functionally, psaA and PsaB bind P700, the primary electron donor of photosystem I (PSI), as well as the electron acceptors A0, A1 and FX. PSI is a plastocyanin-ferredoxin oxidoreductase, converting photonic excitation into a charge separation, which transfers an electron from the donor P700 chlorophyll pair to the spectroscopically characterized acceptors A0, A1, FX, FA and FB in turn. Oxidized P700 is reduced on the lumenal side of the thylakoid membrane by plastocyanin. This chain is Photosystem I P700 chlorophyll a apoprotein A2, found in Pinus thunbergii (Japanese black pine).